The sequence spans 5061 residues: E3 ubiquitin-protein ligase rnf213-beta (5061 aa).

Positions 1–12 (MTRKRKSGKKGK) are enriched in basic residues. Residues 1-334 (MTRKRKSGKK…QRKPSPVRAP (334 aa)) are disordered. 2 stretches are compositionally biased toward polar residues: residues 24–52 (GGST…TQKD) and 75–87 (SDGS…TNKE). The segment covering 100-110 (LQKKGPQKRKG) has biased composition (basic residues). Polar residues-rich tracts occupy residues 127-163 (QTSY…TSAS) and 172-200 (TETV…QPPQ). Basic and acidic residues-rich tracts occupy residues 217–229 (KGSE…EESV) and 236–289 (LSEI…EEPK). The span at 292 to 301 (AAAAATGKTG) shows a compositional bias: low complexity. The span at 306-322 (EQTNQIEANQDSTMESK) shows a compositional bias: polar residues. ATP-binding positions include 1923–1928 (AVGKSL), Glu-2023, Asp-2074, Lys-2417, and Ser-2492. Zn(2+) contacts are provided by Cys-3957, Cys-3960, Cys-3972, His-3974, Cys-3977, Cys-3980, Cys-3993, Cys-3996, Cys-4451, and His-4455. The segment at 3957 to 3997 (CRVCLMELSEPFALPCEHVFCRSCLRRSMEREEAQHCPVCR) adopts an RING-type zinc-finger fold. The segment at 4429-4501 (MPDDHTSEAK…AYGDYDRTRP (73 aa)) adopts an RZ-type zinc-finger fold. The active-site Nucleophile; for E3 ubiquitin-lipopolysaccharide ligase activity is Cys-4462. Positions 4471 and 4474 each coordinate Zn(2+).

The protein belongs to the AAA ATPase family.

It localises to the cytoplasm. The protein resides in the cytosol. Its subcellular location is the lipid droplet. The enzyme catalyses S-ubiquitinyl-[E2 ubiquitin-conjugating enzyme]-L-cysteine + [acceptor protein]-L-lysine = [E2 ubiquitin-conjugating enzyme]-L-cysteine + N(6)-ubiquitinyl-[acceptor protein]-L-lysine.. The catalysed reaction is ATP + H2O = ADP + phosphate + H(+). Its pathway is protein modification; protein ubiquitination. Atypical E3 ubiquitin ligase that can catalyze ubiquitination of both proteins and lipids, and which is involved in various processes, such as lipid metabolism, angiogenesis and cell-autonomous immunity. Acts as a key immune sensor by catalyzing ubiquitination of the lipid A moiety of bacterial lipopolysaccharide (LPS) via its RZ-type zinc-finger: restricts the proliferation of cytosolic bacteria, such as Salmonella, by generating the bacterial ubiquitin coat through the ubiquitination of LPS. Ubiquitination of LPS triggers cell-autonomous immunity, such as antibacterial autophagy, leading to degradation of the microbial invader. Involved in lipid metabolism by regulating fat storage and lipid droplet formation; act by inhibiting the lipolytic process. Also regulates lipotoxicity by inhibiting desaturation of fatty acids. Also acts as an E3 ubiquitin-protein ligase via its RING-type zinc finger. Involved in the non-canonical Wnt signaling pathway in vascular development: acts by mediating ubiquitination and degradation of proteins downstream of rspo3, leading to inhibit the non-canonical Wnt signaling pathway and promoting vessel regression. Also has ATPase activity; ATPase activity is required for ubiquitination of LPS. The chain is E3 ubiquitin-protein ligase rnf213-beta (rnf213b) from Danio rerio (Zebrafish).